Here is a 365-residue protein sequence, read N- to C-terminus: Phosphate acyltransferase (365 aa).

The protein belongs to the PlsX family. As to quaternary structure, homodimer. Probably interacts with PlsY.

It localises to the cytoplasm. The enzyme catalyses a fatty acyl-[ACP] + phosphate = an acyl phosphate + holo-[ACP]. Its pathway is lipid metabolism; phospholipid metabolism. Its function is as follows. Catalyzes the reversible formation of acyl-phosphate (acyl-PO(4)) from acyl-[acyl-carrier-protein] (acyl-ACP). This enzyme utilizes acyl-ACP as fatty acyl donor, but not acyl-CoA. The protein is Phosphate acyltransferase of Picosynechococcus sp. (strain ATCC 27264 / PCC 7002 / PR-6) (Agmenellum quadruplicatum).